The following is a 117-amino-acid chain: Large ribosomal subunit protein bL20c (117 aa).

The protein belongs to the bacterial ribosomal protein bL20 family.

The protein localises to the plastid. It localises to the chloroplast. Binds directly to 23S ribosomal RNA and is necessary for the in vitro assembly process of the 50S ribosomal subunit. It is not involved in the protein synthesizing functions of that subunit. This is Large ribosomal subunit protein bL20c from Populus trichocarpa (Western balsam poplar).